We begin with the raw amino-acid sequence, 502 residues long: Zinc finger protein 3 homolog (502 aa).

Composition is skewed to basic and acidic residues over residues 1–13 and 80–93; these read MGTE…PKEE and PSSE…ESER. Disordered stretches follow at residues 1-26 and 47-103; these read MGTE…SLLE and LEGH…NLVT. Residues Lys6 and Lys11 each participate in a glycyl lysine isopeptide (Lys-Gly) (interchain with G-Cter in SUMO2) cross-link. 13 C2H2-type zinc fingers span residues 141–163, 169–191, 197–219, 225–247, 253–275, 281–303, 309–331, 337–359, 365–387, 393–415, 421–443, 449–471, and 477–499; these read HTCK…MRVH, FECK…LRIH, FACN…HRIH, YKCE…QRIH, YECN…QRIH, HECN…QKIH, YLCN…QRIH, YECN…IRIH, YVCK…ERIH, YECF…QRIH, HQCN…QKIH, YECS…QRIH, and YECQ…QSVH.

It belongs to the krueppel C2H2-type zinc-finger protein family.

The protein resides in the nucleus. May be involved in transcriptional regulation. This chain is Zinc finger protein 3 homolog (ZFP3), found in Homo sapiens (Human).